The following is a 56-amino-acid chain: Bowman-Birk type proteinase inhibitor I-2B (56 aa).

Disulfide bonds link Cys-10–Cys-25, Cys-15–Cys-23, Cys-32–Cys-39, and Cys-36–Cys-51.

This sequence belongs to the Bowman-Birk serine protease inhibitor family.

This chain is Bowman-Birk type proteinase inhibitor I-2B, found in Triticum aestivum (Wheat).